Here is a 146-residue protein sequence, read N- to C-terminus: UPF0178 protein BCAH820_3075 (146 aa).

The protein belongs to the UPF0178 family.

The chain is UPF0178 protein BCAH820_3075 from Bacillus cereus (strain AH820).